A 194-amino-acid polypeptide reads, in one-letter code: Fe/S biogenesis protein NfuA (194 aa).

The [4Fe-4S] cluster site is built by Cys151 and Cys154.

It belongs to the NfuA family. As to quaternary structure, homodimer. The cofactor is [4Fe-4S] cluster.

In terms of biological role, involved in iron-sulfur cluster biogenesis. Binds a 4Fe-4S cluster, can transfer this cluster to apoproteins, and thereby intervenes in the maturation of Fe/S proteins. Could also act as a scaffold/chaperone for damaged Fe/S proteins. The protein is Fe/S biogenesis protein NfuA of Mannheimia succiniciproducens (strain KCTC 0769BP / MBEL55E).